We begin with the raw amino-acid sequence, 154 residues long: Large ribosomal subunit protein uL15 (154 aa).

A disordered region spans residues 1-61 (MDLSTLKPVA…GGQMPLMRRM (61 aa)).

It belongs to the universal ribosomal protein uL15 family. As to quaternary structure, part of the 50S ribosomal subunit.

Its function is as follows. Binds to the 23S rRNA. This Oenococcus oeni (strain ATCC BAA-331 / PSU-1) protein is Large ribosomal subunit protein uL15.